The sequence spans 274 residues: Penicillin-insensitive murein endopeptidase (274 aa).

Residues 1-19 form the signal peptide; sequence MNKTAIALLALLASSASLA. 3 disulfide bridges follow: cysteine 44/cysteine 265, cysteine 187/cysteine 235, and cysteine 216/cysteine 223. Residues histidine 110, histidine 113, aspartate 120, aspartate 147, histidine 150, and histidine 211 each coordinate Zn(2+). Residues 228 to 265 are disordered; the sequence is LPPPGDGCGAELQSWFAPPKPGTTKPEKKTPPPLPPSC.

Belongs to the peptidase M74 family. Dimer. It depends on Zn(2+) as a cofactor.

The protein localises to the periplasm. Its function is as follows. Murein endopeptidase that cleaves the D-alanyl-meso-2,6-diamino-pimelyl amide bond that connects peptidoglycan strands. Likely plays a role in the removal of murein from the sacculus. The sequence is that of Penicillin-insensitive murein endopeptidase from Shigella boydii serotype 18 (strain CDC 3083-94 / BS512).